The sequence spans 381 residues: Queuine tRNA-ribosyltransferase (381 aa).

Aspartate 92 serves as the catalytic Proton acceptor. Substrate contacts are provided by residues 92–96, aspartate 146, glutamine 190, and glycine 217; that span reads DSGGF. The tract at residues 248–254 is RNA binding; that stretch reads GVGRPED. Aspartate 267 (nucleophile) is an active-site residue. The tract at residues 272 to 276 is RNA binding; important for wobble base 34 recognition; the sequence is TRNAR. 4 residues coordinate Zn(2+): cysteine 305, cysteine 307, cysteine 310, and histidine 337.

Belongs to the queuine tRNA-ribosyltransferase family. As to quaternary structure, homodimer. Within each dimer, one monomer is responsible for RNA recognition and catalysis, while the other monomer binds to the replacement base PreQ1. Zn(2+) is required as a cofactor.

The catalysed reaction is 7-aminomethyl-7-carbaguanine + guanosine(34) in tRNA = 7-aminomethyl-7-carbaguanosine(34) in tRNA + guanine. It participates in tRNA modification; tRNA-queuosine biosynthesis. Functionally, catalyzes the base-exchange of a guanine (G) residue with the queuine precursor 7-aminomethyl-7-deazaguanine (PreQ1) at position 34 (anticodon wobble position) in tRNAs with GU(N) anticodons (tRNA-Asp, -Asn, -His and -Tyr). Catalysis occurs through a double-displacement mechanism. The nucleophile active site attacks the C1' of nucleotide 34 to detach the guanine base from the RNA, forming a covalent enzyme-RNA intermediate. The proton acceptor active site deprotonates the incoming PreQ1, allowing a nucleophilic attack on the C1' of the ribose to form the product. After dissociation, two additional enzymatic reactions on the tRNA convert PreQ1 to queuine (Q), resulting in the hypermodified nucleoside queuosine (7-(((4,5-cis-dihydroxy-2-cyclopenten-1-yl)amino)methyl)-7-deazaguanosine). This Xanthomonas oryzae pv. oryzae (strain MAFF 311018) protein is Queuine tRNA-ribosyltransferase.